Consider the following 316-residue polypeptide: Ribosomal protein L11 methyltransferase (316 aa).

S-adenosyl-L-methionine contacts are provided by Thr-160, Gly-181, Asp-203, and Asn-246.

Belongs to the methyltransferase superfamily. PrmA family.

Its subcellular location is the cytoplasm. It catalyses the reaction L-lysyl-[protein] + 3 S-adenosyl-L-methionine = N(6),N(6),N(6)-trimethyl-L-lysyl-[protein] + 3 S-adenosyl-L-homocysteine + 3 H(+). Its function is as follows. Methylates ribosomal protein L11. The chain is Ribosomal protein L11 methyltransferase from Heliobacterium modesticaldum (strain ATCC 51547 / Ice1).